The sequence spans 470 residues: N amino acid transport system protein (470 aa).

Basic and acidic residues predominate over residues 1-11 (MDSQYETKKND). A disordered region spans residues 1 to 21 (MDSQYETKKNDPNAIMPYPES). Residues 1–56 (MDSQYETKKNDPNAIMPYPESNDEHVGEVRGLGGGIMDKEPEAQEGHAKFHRLGWK) lie on the Extracellular side of the membrane. Transmembrane regions (helical) follow at residues 57-77 (RLTV…LPGA) and 78-98 (FATL…LICI). Over 99-131 (YTAHVIGQTKLKHPEIAHYADVGRVMFGRWGYE) the chain is Extracellular. The chain crosses the membrane as a helical span at residues 132 to 152 (IISFMFVLQLIFIVGSHVLTG). The Cytoplasmic portion of the chain corresponds to 153-168 (TIMWGTITDNGNGTCS). 2 consecutive transmembrane segments (helical) span residues 169 to 189 (LVFG…PSFA) and 191 to 211 (VAIL…ITMI). At 212 to 236 (ATGIRSSHQEGGLAAVPWSCWPKED) the chain is on the cytoplasmic side. A helical transmembrane segment spans residues 237-257 (LSLAEGFIAVSNIVFAYSFAM). At 258 to 275 (CQFSFMDEMHTPSDYKKS) the chain is on the extracellular side. The chain crosses the membrane as a helical span at residues 276–296 (IVALGLIEIFIYTVTGGVVYA). The Cytoplasmic segment spans residues 297 to 316 (FVGPEVQSPALLSAGPLLAK). Residues 317 to 337 (VAFGIALPVIFISGSINTVVV) traverse the membrane as a helical segment. The Extracellular segment spans residues 338-357 (SRYLIERIWPNNVIRYVNTP). Residues 358 to 378 (AGWMVWLGFDFGITLIAWVIA) form a helical membrane-spanning segment. Over 379 to 386 (EAIPFFSD) the chain is Cytoplasmic. Residues 387–407 (LLAICSALFISGFSFYFPALM) traverse the membrane as a helical segment. At 408 to 427 (YFKITRNDAKSQGKKYFLDA) the chain is on the extracellular side. A helical transmembrane segment spans residues 428-448 (LNMLCFVIGMGILGIGTYAAI). The Cytoplasmic segment spans residues 449-470 (QDIMDRYDHGKVSKPYSCAPLA).

Belongs to the amino acid/polyamine transporter 2 family.

The protein localises to the membrane. In terms of biological role, required for the transport of neutral aliphatic and aromatic amino acids via the N system. The chain is N amino acid transport system protein (mtr) from Neurospora crassa (strain ATCC 24698 / 74-OR23-1A / CBS 708.71 / DSM 1257 / FGSC 987).